The chain runs to 378 residues: Erythronate-4-phosphate dehydrogenase (378 aa).

Substrate contacts are provided by serine 45 and threonine 66. Residues aspartate 146 and threonine 175 each coordinate NAD(+). The active site involves arginine 208. Residue aspartate 232 participates in NAD(+) binding. The active site involves glutamate 237. Histidine 254 serves as the catalytic Proton donor. Residue glycine 257 coordinates NAD(+). Tyrosine 258 is a substrate binding site.

This sequence belongs to the D-isomer specific 2-hydroxyacid dehydrogenase family. PdxB subfamily. As to quaternary structure, homodimer.

It localises to the cytoplasm. The catalysed reaction is 4-phospho-D-erythronate + NAD(+) = (R)-3-hydroxy-2-oxo-4-phosphooxybutanoate + NADH + H(+). The protein operates within cofactor biosynthesis; pyridoxine 5'-phosphate biosynthesis; pyridoxine 5'-phosphate from D-erythrose 4-phosphate: step 2/5. Functionally, catalyzes the oxidation of erythronate-4-phosphate to 3-hydroxy-2-oxo-4-phosphonooxybutanoate. The sequence is that of Erythronate-4-phosphate dehydrogenase from Escherichia coli O6:H1 (strain CFT073 / ATCC 700928 / UPEC).